A 689-amino-acid polypeptide reads, in one-letter code: Elongation factor G 1 (689 aa).

The 276-residue stretch at 7-282 (DQVRTIGIIS…AVVDFLPSPL (276 aa)) folds into the tr-type G domain. GTP is bound by residues 16–23 (SHIDAGKT), 80–84 (DTPGH), and 134–137 (NKMD).

This sequence belongs to the TRAFAC class translation factor GTPase superfamily. Classic translation factor GTPase family. EF-G/EF-2 subfamily.

The protein resides in the cytoplasm. Catalyzes the GTP-dependent ribosomal translocation step during translation elongation. During this step, the ribosome changes from the pre-translocational (PRE) to the post-translocational (POST) state as the newly formed A-site-bound peptidyl-tRNA and P-site-bound deacylated tRNA move to the P and E sites, respectively. Catalyzes the coordinated movement of the two tRNA molecules, the mRNA and conformational changes in the ribosome. This is Elongation factor G 1 from Geobacter sulfurreducens (strain ATCC 51573 / DSM 12127 / PCA).